The chain runs to 154 residues: Ribosome maturation factor RimP (154 aa).

It belongs to the RimP family.

It localises to the cytoplasm. Functionally, required for maturation of 30S ribosomal subunits. The polypeptide is Ribosome maturation factor RimP (Natranaerobius thermophilus (strain ATCC BAA-1301 / DSM 18059 / JW/NM-WN-LF)).